An 88-amino-acid polypeptide reads, in one-letter code: Putative membrane protein insertion efficiency factor (88 aa).

The interval 68-88 is disordered; sequence VPPKKDKNADSEHSCKVHHHH. Positions 69–82 are enriched in basic and acidic residues; the sequence is PPKKDKNADSEHSC.

The protein belongs to the UPF0161 family.

It is found in the cell membrane. In terms of biological role, could be involved in insertion of integral membrane proteins into the membrane. The protein is Putative membrane protein insertion efficiency factor of Listeria monocytogenes serovar 1/2a (strain ATCC BAA-679 / EGD-e).